The following is a 293-amino-acid chain: Bifunctional protein FolD (293 aa).

Residues 164 to 166 (GRS), S193, and T234 contribute to the NADP(+) site.

Belongs to the tetrahydrofolate dehydrogenase/cyclohydrolase family. In terms of assembly, homodimer.

It carries out the reaction (6R)-5,10-methylene-5,6,7,8-tetrahydrofolate + NADP(+) = (6R)-5,10-methenyltetrahydrofolate + NADPH. The enzyme catalyses (6R)-5,10-methenyltetrahydrofolate + H2O = (6R)-10-formyltetrahydrofolate + H(+). It participates in one-carbon metabolism; tetrahydrofolate interconversion. Its function is as follows. Catalyzes the oxidation of 5,10-methylenetetrahydrofolate to 5,10-methenyltetrahydrofolate and then the hydrolysis of 5,10-methenyltetrahydrofolate to 10-formyltetrahydrofolate. In Bacteroides thetaiotaomicron (strain ATCC 29148 / DSM 2079 / JCM 5827 / CCUG 10774 / NCTC 10582 / VPI-5482 / E50), this protein is Bifunctional protein FolD.